A 202-amino-acid polypeptide reads, in one-letter code: Probable molybdenum cofactor guanylyltransferase (202 aa).

GTP contacts are provided by residues 9–11 (VAG), K22, N50, D77, and D102. D102 is a binding site for Mg(2+).

Belongs to the MobA family. The cofactor is Mg(2+).

Its subcellular location is the cytoplasm. It catalyses the reaction Mo-molybdopterin + GTP + H(+) = Mo-molybdopterin guanine dinucleotide + diphosphate. Transfers a GMP moiety from GTP to Mo-molybdopterin (Mo-MPT) cofactor (Moco or molybdenum cofactor) to form Mo-molybdopterin guanine dinucleotide (Mo-MGD) cofactor. This Natronomonas pharaonis (strain ATCC 35678 / DSM 2160 / CIP 103997 / JCM 8858 / NBRC 14720 / NCIMB 2260 / Gabara) (Halobacterium pharaonis) protein is Probable molybdenum cofactor guanylyltransferase.